Reading from the N-terminus, the 128-residue chain is MGKGNAKNSGGGDKKSKAKAGDAKDDSKGKMKGAQSVNVRHILCEKFSKKEEALEKIRNGAKFDEVAREYSEDKARQGGSLGWKSKGELELPFEEVAFSLEQSTTGNPKIGEAKTGYGYHIIMVEGRK.

Residues 1-35 (MGKGNAKNSGGGDKKSKAKAGDAKDDSKGKMKGAQ) form a disordered region. The span at 12-29 (GDKKSKAKAGDAKDDSKG) shows a compositional bias: basic and acidic residues. One can recognise a PpiC domain in the interval 34–126 (AQSVNVRHIL…YGYHIIMVEG (93 aa)).

This sequence belongs to the PpiC/parvulin rotamase family. PIN4 subfamily.

The enzyme catalyses [protein]-peptidylproline (omega=180) = [protein]-peptidylproline (omega=0). Functionally, PPIases accelerate the folding of proteins. It catalyzes the cis-trans isomerization of proline imidic peptide bonds in oligopeptides. The protein is Peptidyl-prolyl cis-trans isomerase pin4 (pin4) of Emericella nidulans (strain FGSC A4 / ATCC 38163 / CBS 112.46 / NRRL 194 / M139) (Aspergillus nidulans).